The chain runs to 344 residues: MLDVDNLDLENLLKKYYEKTNEKIVFVNKDGKVIAMNDAAEEIISKDNNYSAMTNAICNRCEGYSNEFALQSCINCYLDTTKPNDMNFQVFMKTVDNKIQPFTASYQCIDDEAQIYAFTLQDISPQIERQEKMYQRQMLRKTIAAQENERKRISRELHDSVVQEMLNVDVELRLLKYQQDMAQLIEKSEHIELLMSNLINDIRDLSVELRPSSLDDLGLEAAFKSYFKQLEYNYGLNVVYQSNIQTIRFDSEIETVVYRVVQEAIFNALKYAGVYEVEVTIQQTEEGLIAEIIDRGKGFDPNLKPQGTGLGLYGMNERAELVKGTVNIETHIGKGTIITLEVPV.

4 residues coordinate [4Fe-4S] cluster: cysteine 58, cysteine 61, cysteine 73, and cysteine 76. The Histidine kinase domain occupies 147–344 (ENERKRISRE…GTIITLEVPV (198 aa)). Histidine 158 carries the phosphohistidine; by autocatalysis modification.

Requires [4Fe-4S] cluster as cofactor. In terms of processing, autophosphorylated.

The protein resides in the cytoplasm. The enzyme catalyses ATP + protein L-histidine = ADP + protein N-phospho-L-histidine.. In terms of biological role, member of the two-component regulatory system NreB/NreC involved in the control of dissimilatory nitrate/nitrite reduction in response to oxygen. NreB functions as a direct oxygen sensor histidine kinase which is autophosphorylated, in the absence of oxygen, probably at the conserved histidine residue, and transfers its phosphate group probably to a conserved aspartate residue of NreC. NreB/NreC activates the expression of the nitrate (narGHJI) and nitrite (nir) reductase operons, as well as the putative nitrate transporter gene narT. The polypeptide is Oxygen sensor histidine kinase NreB (nreB) (Staphylococcus haemolyticus (strain JCSC1435)).